A 114-amino-acid chain; its full sequence is Large ribosomal subunit protein uL22c (114 aa).

Belongs to the universal ribosomal protein uL22 family. Part of the 50S ribosomal subunit.

The protein localises to the plastid. The protein resides in the chloroplast. This protein binds specifically to 23S rRNA. Functionally, the globular domain of the protein is located near the polypeptide exit tunnel on the outside of the subunit, while an extended beta-hairpin is found that lines the wall of the exit tunnel in the center of the 70S ribosome. This chain is Large ribosomal subunit protein uL22c (rpl22), found in Gracilaria tenuistipitata var. liui (Red alga).